The primary structure comprises 436 residues: Retinoic acid receptor RXR (436 aa).

A disordered region spans residues 1-108; that stretch reads MDRSEGMDTL…GPSPSPGLPH (108 aa). A modulating region spans residues 1–116; the sequence is MDRSEGMDTL…PHSSLHTKHI (116 aa). Residues 13-22 are compositionally biased toward low complexity; sequence SMPSGMSMGM. Polar residues-rich tracts occupy residues 40–49 and 62–76; these read SSLTSPTSTH and MASS…QQMH. The segment covering 85-98 has biased composition (low complexity); that stretch reads SSMGSPPMLCLSPS. NR C4-type zinc fingers lie at residues 117–137 and 153–172; these read CAIC…CEGC and CRDD…CQYC. A DNA-binding region (nuclear receptor) is located at residues 117-182; that stretch reads CAICGDRASG…RYMKCLSMGM (66 aa). Positions 183 to 206 are hinge; sequence KREAVQEERQRVKEKGDGEVESTS. Residues 189–200 are compositionally biased toward basic and acidic residues; the sequence is EERQRVKEKGDG. The segment at 189-209 is disordered; it reads EERQRVKEKGDGEVESTSGAN. Residues 209–432 enclose the NR LBD domain; the sequence is NNDMPVEQIL…TFLMEMLENP (224 aa). 9-cis-retinoate is bound by residues R290 and A301.

Belongs to the nuclear hormone receptor family. NR2 subfamily. Homodimer (via ligand-binding domain). Heterodimer. Homotetramer consisting of 2 canonical homodimers. Within the tetramer, each monomer binds one molecule of 9C-RA and a NCOA1-derived peptide containing an L-X(2)-L-L motif.

Its subcellular location is the nucleus. Its function is as follows. Ligand-dependent transcription factor probably involved in the retinoic acid response pathway. Binds 9-cis-retinoic acid (9C-RA) and, to a lesser extent, docosahexaenoic acid (DHA), phytanic acid, methoprene acid and oleic acid. Binds to double-stranded DNA sequences containing direct repeats (DR) with the consensus sequence 5'-[AG]GGTCA-3' and 1, 2, 3, 4 or 5 nucleotides in between (DR1, DR2, DR3. DR4 and DR5, respectively). Binding to DR1 is strongest. Transactivates gene expression when 9C-RA or DHA is bound. In Biomphalaria glabrata (Bloodfluke planorb), this protein is Retinoic acid receptor RXR.